The chain runs to 292 residues: Bifunctional protein FolD (292 aa).

Residues 165-167, Ser190, and Thr231 contribute to the NADP(+) site; that span reads GRS.

Belongs to the tetrahydrofolate dehydrogenase/cyclohydrolase family. In terms of assembly, homodimer.

The catalysed reaction is (6R)-5,10-methylene-5,6,7,8-tetrahydrofolate + NADP(+) = (6R)-5,10-methenyltetrahydrofolate + NADPH. It catalyses the reaction (6R)-5,10-methenyltetrahydrofolate + H2O = (6R)-10-formyltetrahydrofolate + H(+). It functions in the pathway one-carbon metabolism; tetrahydrofolate interconversion. In terms of biological role, catalyzes the oxidation of 5,10-methylenetetrahydrofolate to 5,10-methenyltetrahydrofolate and then the hydrolysis of 5,10-methenyltetrahydrofolate to 10-formyltetrahydrofolate. This chain is Bifunctional protein FolD, found in Arthrobacter globiformis.